The following is a 314-amino-acid chain: Ribonuclease Z (314 aa).

Zn(2+)-binding residues include H62, H64, D66, H67, H139, D210, and H268. D66 functions as the Proton acceptor in the catalytic mechanism.

Belongs to the RNase Z family. In terms of assembly, homodimer. It depends on Zn(2+) as a cofactor.

It catalyses the reaction Endonucleolytic cleavage of RNA, removing extra 3' nucleotides from tRNA precursor, generating 3' termini of tRNAs. A 3'-hydroxy group is left at the tRNA terminus and a 5'-phosphoryl group is left at the trailer molecule.. Its function is as follows. Zinc phosphodiesterase, which displays some tRNA 3'-processing endonuclease activity. Probably involved in tRNA maturation, by removing a 3'-trailer from precursor tRNA. This is Ribonuclease Z from Rippkaea orientalis (strain PCC 8801 / RF-1) (Cyanothece sp. (strain PCC 8801)).